The primary structure comprises 120 residues: uncharacterized protein (120 aa).

A VOC domain is found at 4–120; the sequence is QIGTVAVYVE…EDGNVFLLKE (117 aa).

This is an uncharacterized protein from Bacillus subtilis (strain 168).